The following is a 459-amino-acid chain: Putrescine aminotransferase (459 aa).

Pyridoxal 5'-phosphate-binding positions include 150 to 151 (GT) and Q274. N6-(pyridoxal phosphate)lysine is present on K300. T332 lines the pyridoxal 5'-phosphate pocket.

This sequence belongs to the class-III pyridoxal-phosphate-dependent aminotransferase family. Putrescine aminotransferase subfamily. The cofactor is pyridoxal 5'-phosphate.

The catalysed reaction is an alkane-alpha,omega-diamine + 2-oxoglutarate = an omega-aminoaldehyde + L-glutamate. It carries out the reaction putrescine + 2-oxoglutarate = 1-pyrroline + L-glutamate + H2O. It catalyses the reaction cadaverine + 2-oxoglutarate = 5-aminopentanal + L-glutamate. Its pathway is amine and polyamine degradation; putrescine degradation; 4-aminobutanal from putrescine (transaminase route): step 1/1. In terms of biological role, catalyzes the aminotransferase reaction from putrescine to 2-oxoglutarate, leading to glutamate and 4-aminobutanal, which spontaneously cyclizes to form 1-pyrroline. This is the first step in one of two pathways for putrescine degradation, where putrescine is converted into 4-aminobutanoate (gamma-aminobutyrate or GABA) via 4-aminobutanal. Also functions as a cadaverine transaminase in a a L-lysine degradation pathway to succinate that proceeds via cadaverine, glutarate and L-2-hydroxyglutarate. The sequence is that of Putrescine aminotransferase from Escherichia coli O8 (strain IAI1).